We begin with the raw amino-acid sequence, 174 residues long: MKNIEIEDDLYAYIASQTQHIGETASDILRRLVMPENTVVKTVVAAKPSATTKKPVGDVFSQITTDELSEYPKMVERFLKILSVLESMHGAQFDEVLTLSGRNRVYFAKDKETLLQASSVTNPKQIGESTFWVMTNNNTAKKASLIKEVAEVLGYNANDGQRLAALFAPELYED.

Belongs to the SeqA family. In terms of assembly, homodimer. Polymerizes to form helical filaments.

It is found in the cytoplasm. Negative regulator of replication initiation, which contributes to regulation of DNA replication and ensures that replication initiation occurs exactly once per chromosome per cell cycle. Binds to pairs of hemimethylated GATC sequences in the oriC region, thus preventing assembly of replication proteins and re-initiation at newly replicated origins. Repression is relieved when the region becomes fully methylated. The sequence is that of Negative modulator of initiation of replication from Pseudoalteromonas atlantica (strain T6c / ATCC BAA-1087).